A 165-amino-acid polypeptide reads, in one-letter code: Glutamyl-tRNA(Gln) amidotransferase subunit F, mitochondrial (165 aa).

The N-terminal 19 residues, methionine 1–phenylalanine 19, are a transit peptide targeting the mitochondrion.

The protein belongs to the GatF family. In terms of assembly, subunit of the heterotrimeric GatFAB amidotransferase (AdT) complex, composed of A, B and F subunits.

The protein localises to the mitochondrion inner membrane. The enzyme catalyses L-glutamyl-tRNA(Gln) + L-glutamine + ATP + H2O = L-glutaminyl-tRNA(Gln) + L-glutamate + ADP + phosphate + H(+). Functionally, allows the formation of correctly charged Gln-tRNA(Gln) through the transamidation of misacylated Glu-tRNA(Gln) in the mitochondria. The reaction takes place in the presence of glutamine and ATP through an activated gamma-phospho-Glu-tRNA(Gln). Required for proper protein synthesis within the mitochondrion. The polypeptide is Glutamyl-tRNA(Gln) amidotransferase subunit F, mitochondrial (Candida albicans (strain WO-1) (Yeast)).